The sequence spans 327 residues: Homeotic protein distal-less (327 aa).

A DNA-binding region (homeobox) is located at residues 124 to 183 (MRKPRTIYSSLQLQQLNRRFQRTQYLALPERAELAASLGLTQTQVKIWFQNRRSKYKKMM). Residues 181–303 (KMMKAAQGPG…THHHNPPPQM (123 aa)) are disordered. The span at 231–249 (LPPGHSPTPSSTPVSELSP) shows a compositional bias: low complexity. A compositionally biased stretch (basic and acidic residues) spans 266-275 (QKPHWIDHKP). The segment covering 276 to 286 (PPQMTPQPPHP) has biased composition (pro residues).

As to expression, expressed in the embryo in limb primordia of the head and thoracic segments. Expressed in regions of the larval leg, wing, antennal and haltere disks that form the distal-most regions of the mature structures (in the leg this corresponds to the tarsus and the distal tibia). Found in the optic center of the developing larval brain.

The protein localises to the nucleus. In terms of biological role, transcription factor that plays a role in larval and adult appendage development. Specifies the identity of ventral appendages (including legs and antennae) and suppresses dorsal appendage development. Involved in patterning the distal-proximal limb axis. May control the adhesive properties of cells during limb morphogenesis. Also has a secondary role in the normal patterning of the wing margin. The chain is Homeotic protein distal-less (Dll) from Drosophila melanogaster (Fruit fly).